A 577-amino-acid polypeptide reads, in one-letter code: Sensory neuron membrane protein 2 (577 aa).

The Cytoplasmic portion of the chain corresponds to 1–6 (MVQCTL). The chain crosses the membrane as a helical span at residues 7–27 (IWAGIGAMMAVSGALLGWVVF). At 28–519 (PRAVHEKVIE…LMKVLSLLDV (492 aa)) the chain is on the extracellular side. Residues asparagine 66, asparagine 161, asparagine 271, and asparagine 307 are each glycosylated (N-linked (GlcNAc...) asparagine). 3 cysteine pairs are disulfide-bonded: cysteine 316–cysteine 384, cysteine 345–cysteine 411, and cysteine 386–cysteine 400. A helical membrane pass occupies residues 520-540 (VQWVLIGVGLLLAVLMPTVYF). Over 541-577 (VKRCRGEGSRTVSPAVTATTSAASLSTVAGVTGDRSK) the chain is Cytoplasmic.

Belongs to the CD36 family.

It localises to the cell membrane. In terms of biological role, plays an olfactory role that is not restricted to pheromone sensitivity. The polypeptide is Sensory neuron membrane protein 2 (Anopheles gambiae (African malaria mosquito)).